Reading from the N-terminus, the 207-residue chain is Small ribosomal subunit protein uS2 (207 aa).

The protein belongs to the universal ribosomal protein uS2 family.

The chain is Small ribosomal subunit protein uS2 from Nitrosopumilus maritimus (strain SCM1).